The chain runs to 275 residues: Dermonecrotic toxin LamSicTox-alphaIV1iii (275 aa).

Residue His-5 is part of the active site. 2 residues coordinate Mg(2+): Glu-25 and Asp-27. His-41 acts as the Nucleophile in catalysis. Intrachain disulfides connect Cys-45/Cys-51 and Cys-47/Cys-192. Asp-85 lines the Mg(2+) pocket.

It belongs to the arthropod phospholipase D family. Class II subfamily. Requires Mg(2+) as cofactor. Expressed by the venom gland.

Its subcellular location is the secreted. The catalysed reaction is an N-(acyl)-sphingosylphosphocholine = an N-(acyl)-sphingosyl-1,3-cyclic phosphate + choline. It carries out the reaction an N-(acyl)-sphingosylphosphoethanolamine = an N-(acyl)-sphingosyl-1,3-cyclic phosphate + ethanolamine. It catalyses the reaction a 1-acyl-sn-glycero-3-phosphocholine = a 1-acyl-sn-glycero-2,3-cyclic phosphate + choline. The enzyme catalyses a 1-acyl-sn-glycero-3-phosphoethanolamine = a 1-acyl-sn-glycero-2,3-cyclic phosphate + ethanolamine. In terms of biological role, dermonecrotic toxins cleave the phosphodiester linkage between the phosphate and headgroup of certain phospholipids (sphingolipid and lysolipid substrates), forming an alcohol (often choline) and a cyclic phosphate. This toxin acts on sphingomyelin (SM). It may also act on ceramide phosphoethanolamine (CPE), lysophosphatidylcholine (LPC) and lysophosphatidylethanolamine (LPE), but not on lysophosphatidylserine (LPS), and lysophosphatidylglycerol (LPG). It acts by transphosphatidylation, releasing exclusively cyclic phosphate products as second products. Induces dermonecrosis, hemolysis, increased vascular permeability, edema, inflammatory response, and platelet aggregation. The chain is Dermonecrotic toxin LamSicTox-alphaIV1iii from Loxosceles amazonica (Recluse spider).